Consider the following 332-residue polypeptide: Thiosulfate-binding protein (332 aa).

The first 22 residues, 1–22 (MKRLFSASLLAAGLALGGAAHA), serve as a signal peptide directing secretion.

This sequence belongs to the prokaryotic sulfate-binding protein family.

It is found in the periplasm. Binds thiosulfate specifically and with high affinity. Has no detectable affinity for sulfate. This is Thiosulfate-binding protein from Pseudomonas aeruginosa (strain ATCC 15692 / DSM 22644 / CIP 104116 / JCM 14847 / LMG 12228 / 1C / PRS 101 / PAO1).